The following is a 197-amino-acid chain: Recombination protein RecR (197 aa).

A C4-type zinc finger spans residues 56-71 (CVRCFSLTDAETCNFC). Positions 79–174 (RVLCVVETFA…RVTRIAQGLP (96 aa)) constitute a Toprim domain.

The protein belongs to the RecR family.

Its function is as follows. May play a role in DNA repair. It seems to be involved in an RecBC-independent recombinational process of DNA repair. It may act with RecF and RecO. The sequence is that of Recombination protein RecR from Myxococcus xanthus (strain DK1622).